Reading from the N-terminus, the 153-residue chain is Ribosomal RNA large subunit methyltransferase H (153 aa).

S-adenosyl-L-methionine contacts are provided by residues leucine 63, glycine 102, and phenylalanine 121–leucine 126.

The protein belongs to the RNA methyltransferase RlmH family. As to quaternary structure, homodimer.

The protein localises to the cytoplasm. The enzyme catalyses pseudouridine(1915) in 23S rRNA + S-adenosyl-L-methionine = N(3)-methylpseudouridine(1915) in 23S rRNA + S-adenosyl-L-homocysteine + H(+). Its function is as follows. Specifically methylates the pseudouridine at position 1915 (m3Psi1915) in 23S rRNA. The protein is Ribosomal RNA large subunit methyltransferase H of Sulfurovum sp. (strain NBC37-1).